Reading from the N-terminus, the 370-residue chain is Metallophosphoesterase 1 homolog (370 aa).

The chain crosses the membrane as a helical span at residues Cys-7–Leu-27. 6 residues coordinate a divalent metal cation: Asp-52, Asp-94, Asn-132, His-225, His-275, and His-277. A helical membrane pass occupies residues Phe-328–Leu-348.

This sequence belongs to the metallophosphoesterase superfamily. MPPE1 family. Mn(2+) is required as a cofactor.

It localises to the membrane. Its function is as follows. Metallophosphoesterase. This is Metallophosphoesterase 1 homolog (PGAP5) from Drosophila melanogaster (Fruit fly).